The sequence spans 113 residues: U10-theraphotoxin-Hs2a (113 aa).

An N-terminal signal peptide occupies residues 1-21 (MNTVRVTFLLVFVLAVSLGQA). The propeptide occupies 22-67 (DEDGNRMEKRQKKTEAENLLLPKLEELDAKLWEEDSVESRNSRQKR). 3 disulfides stabilise this stretch: Cys68-Cys86, Cys75-Cys91, and Cys85-Cys106.

Belongs to the neurotoxin 14 (magi-1) family. 02 (HWTX-XVIc) subfamily. Expressed by the venom gland.

The protein localises to the secreted. Probable ion channel inhibitor. This Cyriopagopus schmidti (Chinese bird spider) protein is U10-theraphotoxin-Hs2a.